A 540-amino-acid chain; its full sequence is MDSQETKVFENVKQENPDEKKPKVEEPDSQNNASTQSQQKFLDFQLSWCPESERKTTKYHLLKFHSNKAIDPSKSFVPPIKMQRRDPNAPSSSNGEQNAEQGSSSNVNIASIAPYGGAQNMKQNAFKRKTRQVVKVDPQARRLQEEELSPWIMEDFEGKNTWVSTMEGGQSSAYVLFMFSENGFKVIPTDRFYRFNQRNNFQTLSIDEAEAKMNKKTPIPRWFMKKESEENLAEAGSASPMYKLKTVPNARPVTGPRASGSDDELDYDEEFADDEEAPIMEGNEEDNKKLKDKIKKEMLTANLFGEADQDVDLEEENDRQMSREGKKLQRYLKLLEKNLAYESDEEDEDPYASSHDASSEEEVLQEEEELQKREEKLKSRFSANASKTNTPRPLERTPSSVSPVKASSQLQSPNTSIQIRPQEQLINKPGYIILRLSSEKLSRFANDFPRMVPSMGSTETSVGDQVEVVGDTTNVPIDDSNLITEAEVMKALRAGPISIKDLVHLFQRKIRADNRNRLGIQKIIRKVARFENKLLVLKNY.

Positions 1–26 (MDSQETKVFENVKQENPDEKKPKVEE) are enriched in basic and acidic residues. 2 disordered regions span residues 1-39 (MDSQ…QSQQ) and 70-106 (IDPS…SSSN). Composition is skewed to polar residues over residues 29–39 (SQNNASTQSQQ) and 89–106 (APSS…SSSN). Phosphoserine is present on residues serine 259 and serine 261. Positions 280–382 (MEGNEEDNKK…REEKLKSRFS (103 aa)) form a coiled coil. The interval 341 to 416 (YESDEEDEDP…SSQLQSPNTS (76 aa)) is disordered. Residues 359–369 (SEEEVLQEEEE) show a composition bias toward acidic residues. Over residues 381–416 (FSANASKTNTPRPLERTPSSVSPVKASSQLQSPNTS) the composition is skewed to polar residues. Serine 399 carries the phosphoserine modification.

The protein belongs to the TFIIF alpha subunit family. Component of the fcp1/TFIIF/polII complex via interaction of tfg3 with both tfg1/TFIIF-alpha and tfg2/TFIIF-beta subunits.

The protein localises to the nucleus. TFIIF is a general transcription initiation factor that binds to RNA polymerase II and helps to recruit it to the initiation complex in collaboration with TFIIB. It promotes transcription elongation. This is Transcription initiation factor IIF subunit alpha (tfg1) from Schizosaccharomyces pombe (strain 972 / ATCC 24843) (Fission yeast).